Reading from the N-terminus, the 413-residue chain is Putative F-box protein At3g58820 (413 aa).

Residues 1 to 48 enclose the F-box domain; that stretch reads MDGVSSLPNELLCHILSFLTTKEAALTSILSKRWRNLIAFVPNLYIDD.

This chain is Putative F-box protein At3g58820, found in Arabidopsis thaliana (Mouse-ear cress).